A 349-amino-acid polypeptide reads, in one-letter code: Core protein VP7 (349 aa).

N-linked (GlcNAc...) asparagine; by host glycans are attached at residues N193 and N287.

The protein belongs to the orbivirus VP7 family. As to quaternary structure, homotrimer that assemble in a complex of 260 capsomers on an inner scaffold composed of VP3.

Its subcellular location is the virion. Functionally, the VP7 protein is one of the five proteins (with VP1, VP3, VP4, and VP6) which form the inner capsid of the virus. This chain is Core protein VP7 (Segment-7), found in Antilocapra americana (Pronghorn).